A 107-amino-acid polypeptide reads, in one-letter code: Large ribosomal subunit protein uL24 (107 aa).

This sequence belongs to the universal ribosomal protein uL24 family. As to quaternary structure, part of the 50S ribosomal subunit.

Its function is as follows. One of two assembly initiator proteins, it binds directly to the 5'-end of the 23S rRNA, where it nucleates assembly of the 50S subunit. One of the proteins that surrounds the polypeptide exit tunnel on the outside of the subunit. This is Large ribosomal subunit protein uL24 from Thermoanaerobacter pseudethanolicus (strain ATCC 33223 / 39E) (Clostridium thermohydrosulfuricum).